A 385-amino-acid polypeptide reads, in one-letter code: Alkanesulfonate monooxygenase (385 aa).

This sequence belongs to the SsuD family.

It catalyses the reaction an alkanesulfonate + FMNH2 + O2 = an aldehyde + FMN + sulfite + H2O + 2 H(+). In terms of biological role, catalyzes the desulfonation of aliphatic sulfonates. This is Alkanesulfonate monooxygenase from Burkholderia pseudomallei (strain 1710b).